Reading from the N-terminus, the 92-residue chain is Sec-independent protein translocase protein TatA (92 aa).

A helical membrane pass occupies residues 1-21; the sequence is MGIFDWKHWIVILVVVVLVFG. Residues 43–92 are disordered; that stretch reads MNDDEKPADPTVTPAQPVPPVQPQATAQANPPHTIDVQAQKVEEPIRKDV. Over residues 65 to 74 the composition is skewed to low complexity; the sequence is PQATAQANPP. Positions 83–92 are enriched in basic and acidic residues; that stretch reads KVEEPIRKDV.

Belongs to the TatA/E family. The Tat system comprises two distinct complexes: a TatABC complex, containing multiple copies of TatA, TatB and TatC subunits, and a separate TatA complex, containing only TatA subunits. Substrates initially bind to the TatABC complex, which probably triggers association of the separate TatA complex to form the active translocon.

It localises to the cell inner membrane. Part of the twin-arginine translocation (Tat) system that transports large folded proteins containing a characteristic twin-arginine motif in their signal peptide across membranes. TatA could form the protein-conducting channel of the Tat system. The sequence is that of Sec-independent protein translocase protein TatA from Pseudomonas fluorescens (strain Pf0-1).